The following is a 41-amino-acid chain: Large ribosomal subunit protein bL36 (41 aa).

It belongs to the bacterial ribosomal protein bL36 family.

The protein is Large ribosomal subunit protein bL36 of Paracoccus denitrificans (strain Pd 1222).